A 221-amino-acid chain; its full sequence is uncharacterized protein (221 aa).

Residues M1–V18 form the signal peptide.

This is an uncharacterized protein from Aquifex aeolicus (strain VF5).